The chain runs to 260 residues: Thiamine thiazole synthase (260 aa).

NAD(+) contacts are provided by residues Ser41, 60–61, Gly68, Val131, and 159–161; these read ER and HVD. The Fe cation site is built by Asp161 and His176. Met225 is an NAD(+) binding site. Arg235 contacts glycine.

This sequence belongs to the THI4 family. As to quaternary structure, homooctamer; tetramer of dimers. Fe(2+) serves as cofactor.

The enzyme catalyses hydrogen sulfide + glycine + NAD(+) = ADP-5-ethyl-4-methylthiazole-2-carboxylate + nicotinamide + 3 H2O + H(+). Its pathway is cofactor biosynthesis; thiamine diphosphate biosynthesis. Functionally, involved in the biosynthesis of the thiazole moiety of thiamine. Catalyzes the conversion of NAD and glycine to adenosine diphosphate 5-(2-hydroxyethyl)-4-methylthiazole-2-carboxylate (ADT), an adenylated thiazole intermediate, using free sulfide as a source of sulfur. This chain is Thiamine thiazole synthase, found in Archaeoglobus fulgidus (strain ATCC 49558 / DSM 4304 / JCM 9628 / NBRC 100126 / VC-16).